We begin with the raw amino-acid sequence, 473 residues long: 3-isopropylmalate dehydratase large subunit (473 aa).

Positions 351, 414, and 417 each coordinate [4Fe-4S] cluster.

Belongs to the aconitase/IPM isomerase family. LeuC type 1 subfamily. In terms of assembly, heterodimer of LeuC and LeuD. [4Fe-4S] cluster is required as a cofactor.

The enzyme catalyses (2R,3S)-3-isopropylmalate = (2S)-2-isopropylmalate. It participates in amino-acid biosynthesis; L-leucine biosynthesis; L-leucine from 3-methyl-2-oxobutanoate: step 2/4. In terms of biological role, catalyzes the isomerization between 2-isopropylmalate and 3-isopropylmalate, via the formation of 2-isopropylmaleate. The polypeptide is 3-isopropylmalate dehydratase large subunit (Paracidovorax citrulli (strain AAC00-1) (Acidovorax citrulli)).